A 237-amino-acid polypeptide reads, in one-letter code: Ribonuclease PH (237 aa).

Phosphate is bound by residues R86 and 124–126 (GTR).

The protein belongs to the RNase PH family. As to quaternary structure, homohexameric ring arranged as a trimer of dimers.

The catalysed reaction is tRNA(n+1) + phosphate = tRNA(n) + a ribonucleoside 5'-diphosphate. Its function is as follows. Phosphorolytic 3'-5' exoribonuclease that plays an important role in tRNA 3'-end maturation. Removes nucleotide residues following the 3'-CCA terminus of tRNAs; can also add nucleotides to the ends of RNA molecules by using nucleoside diphosphates as substrates, but this may not be physiologically important. Probably plays a role in initiation of 16S rRNA degradation (leading to ribosome degradation) during starvation. The chain is Ribonuclease PH from Shewanella sp. (strain ANA-3).